A 534-amino-acid chain; its full sequence is CTP synthase (534 aa).

Positions 1 to 267 (MTKYIFVTGG…DQIVCDHLKL (267 aa)) are amidoligase domain. Position 13 (S13) interacts with CTP. S13 provides a ligand contact to UTP. 14–19 (SIGKGI) is an ATP binding site. Y54 provides a ligand contact to L-glutamine. D71 contributes to the ATP binding site. D71 and E141 together coordinate Mg(2+). Residues 148–150 (DIE), 188–193 (KTKPTQ), and K224 each bind CTP. UTP is bound by residues 188–193 (KTKPTQ) and K224. 240 to 242 (RDV) serves as a coordination point for ATP. Positions 292–534 (KIALVGKYVE…FVTAAIKNSN (243 aa)) constitute a Glutamine amidotransferase type-1 domain. G354 is a binding site for L-glutamine. C381 (nucleophile; for glutamine hydrolysis) is an active-site residue. Residues 382–385 (LGMQ), E405, and R463 each bind L-glutamine. Active-site residues include H508 and E510.

The protein belongs to the CTP synthase family. As to quaternary structure, homotetramer.

It catalyses the reaction UTP + L-glutamine + ATP + H2O = CTP + L-glutamate + ADP + phosphate + 2 H(+). The enzyme catalyses L-glutamine + H2O = L-glutamate + NH4(+). The catalysed reaction is UTP + NH4(+) + ATP = CTP + ADP + phosphate + 2 H(+). Its pathway is pyrimidine metabolism; CTP biosynthesis via de novo pathway; CTP from UDP: step 2/2. Allosterically activated by GTP, when glutamine is the substrate; GTP has no effect on the reaction when ammonia is the substrate. The allosteric effector GTP functions by stabilizing the protein conformation that binds the tetrahedral intermediate(s) formed during glutamine hydrolysis. Inhibited by the product CTP, via allosteric rather than competitive inhibition. In terms of biological role, catalyzes the ATP-dependent amination of UTP to CTP with either L-glutamine or ammonia as the source of nitrogen. Regulates intracellular CTP levels through interactions with the four ribonucleotide triphosphates. This Streptococcus pyogenes serotype M18 (strain MGAS8232) protein is CTP synthase.